The chain runs to 359 residues: Queuine tRNA-ribosyltransferase (359 aa).

D92 functions as the Proton acceptor in the catalytic mechanism. Substrate contacts are provided by residues 92–96, D146, Q189, and G216; that span reads DSGGF. Positions 245 to 251 are RNA binding; the sequence is GVGKPAD. Catalysis depends on D264, which acts as the Nucleophile. The interval 269-273 is RNA binding; important for wobble base 34 recognition; the sequence is TRSGR. Zn(2+) contacts are provided by C302, C304, C307, and H333.

It belongs to the queuine tRNA-ribosyltransferase family. As to quaternary structure, homodimer. Within each dimer, one monomer is responsible for RNA recognition and catalysis, while the other monomer binds to the replacement base PreQ1. Zn(2+) is required as a cofactor.

The enzyme catalyses 7-aminomethyl-7-carbaguanine + guanosine(34) in tRNA = 7-aminomethyl-7-carbaguanosine(34) in tRNA + guanine. The protein operates within tRNA modification; tRNA-queuosine biosynthesis. Catalyzes the base-exchange of a guanine (G) residue with the queuine precursor 7-aminomethyl-7-deazaguanine (PreQ1) at position 34 (anticodon wobble position) in tRNAs with GU(N) anticodons (tRNA-Asp, -Asn, -His and -Tyr). Catalysis occurs through a double-displacement mechanism. The nucleophile active site attacks the C1' of nucleotide 34 to detach the guanine base from the RNA, forming a covalent enzyme-RNA intermediate. The proton acceptor active site deprotonates the incoming PreQ1, allowing a nucleophilic attack on the C1' of the ribose to form the product. After dissociation, two additional enzymatic reactions on the tRNA convert PreQ1 to queuine (Q), resulting in the hypermodified nucleoside queuosine (7-(((4,5-cis-dihydroxy-2-cyclopenten-1-yl)amino)methyl)-7-deazaguanosine). The sequence is that of Queuine tRNA-ribosyltransferase from Rickettsia bellii (strain RML369-C).